The sequence spans 438 residues: Glutamate-1-semialdehyde 2,1-aminomutase (438 aa).

The residue at position 278 (Lys278) is an N6-(pyridoxal phosphate)lysine.

The protein belongs to the class-III pyridoxal-phosphate-dependent aminotransferase family. HemL subfamily. In terms of assembly, homodimer. The cofactor is pyridoxal 5'-phosphate.

The protein localises to the cytoplasm. The enzyme catalyses (S)-4-amino-5-oxopentanoate = 5-aminolevulinate. It functions in the pathway porphyrin-containing compound metabolism; protoporphyrin-IX biosynthesis; 5-aminolevulinate from L-glutamyl-tRNA(Glu): step 2/2. In Delftia acidovorans (strain DSM 14801 / SPH-1), this protein is Glutamate-1-semialdehyde 2,1-aminomutase.